Consider the following 506-residue polypeptide: MAEKNYVMAIDQGTTSSRAIIFDRNGKKIGSSQKEFPQYFPKSGWVEHNANEIWNSVQSVIAGAFIESGIRPEAIAGIGITNQRETTVVWDKTTGQPIANAIVWQSRQSSPIADQLKVDGHTEMIHEKTGLVIDAYFSATKVRWLLDNIEGAQEKADNGELLFGTIDSWLVWKLTDGQVHVTDYSNASRTMLYNIHKLEWDQEILDLLNIPSSMLPEVKSNSEVYGHTRSYHFYGSEVPIAGMAGDQQAALFGQMAFEKGMIKNTYGTGAFIVMNTGEEPQLSDNDLLTTIGYGINGKVYYALEGSIFVAGSAIQWLRDGLRMIETSPQSEELAAKAKGDNEVYVVPAFTGLGAPYWDSEARGAVFGLTRGTTKEDFVRATLQAVAYQSKDVIDTMKKDSGIDIPLLKVDGGAAKNDLLMQFQADILDIDVQRAANLETTALGAAYLAGLAVGFWKDLDELKSMAEEGQMFTPEMPAEERDNLYEGWKQAVAATQTFKFKAKKEGE.

T14 provides a ligand contact to ADP. ATP is bound by residues T14, T15, and S16. A sn-glycerol 3-phosphate-binding site is contributed by T14. Residue R18 coordinates ADP. Sn-glycerol 3-phosphate-binding residues include R84, E85, and Y136. Glycerol-binding residues include R84, E85, and Y136. At H232 the chain carries Phosphohistidine; by HPr. A sn-glycerol 3-phosphate-binding site is contributed by D246. D246 and Q247 together coordinate glycerol. ADP-binding residues include T268 and G311. Positions 268, 311, 315, and 412 each coordinate ATP. ADP is bound by residues G412 and N416.

Belongs to the FGGY kinase family. As to quaternary structure, homotetramer and homodimer (in equilibrium). In terms of processing, the phosphoenolpyruvate-dependent sugar phosphotransferase system (PTS), including enzyme I, and histidine-containing protein (HPr) are required for the phosphorylation of His-232, which leads to the activation of the enzyme.

It catalyses the reaction glycerol + ATP = sn-glycerol 3-phosphate + ADP + H(+). The protein operates within polyol metabolism; glycerol degradation via glycerol kinase pathway; sn-glycerol 3-phosphate from glycerol: step 1/1. Its activity is regulated as follows. Activated by phosphorylation and inhibited by fructose 1,6-bisphosphate (FBP). In terms of biological role, key enzyme in the regulation of glycerol uptake and metabolism. Catalyzes the phosphorylation of glycerol to yield sn-glycerol 3-phosphate. This chain is Glycerol kinase, found in Enterococcus casseliflavus (Enterococcus flavescens).